A 361-amino-acid polypeptide reads, in one-letter code: Queuine tRNA-ribosyltransferase (361 aa).

The active-site Proton acceptor is the D92. Residues 92–96 (DSGGF), D146, Q189, and G216 each bind substrate. Residues 247-253 (GVGKPAD) form an RNA binding region. The active-site Nucleophile is D266. The interval 271 to 275 (TRSGR) is RNA binding; important for wobble base 34 recognition. Zn(2+) is bound by residues C304, C306, C309, and H335.

The protein belongs to the queuine tRNA-ribosyltransferase family. In terms of assembly, homodimer. Within each dimer, one monomer is responsible for RNA recognition and catalysis, while the other monomer binds to the replacement base PreQ1. It depends on Zn(2+) as a cofactor.

It catalyses the reaction 7-aminomethyl-7-carbaguanine + guanosine(34) in tRNA = 7-aminomethyl-7-carbaguanosine(34) in tRNA + guanine. The protein operates within tRNA modification; tRNA-queuosine biosynthesis. In terms of biological role, catalyzes the base-exchange of a guanine (G) residue with the queuine precursor 7-aminomethyl-7-deazaguanine (PreQ1) at position 34 (anticodon wobble position) in tRNAs with GU(N) anticodons (tRNA-Asp, -Asn, -His and -Tyr). Catalysis occurs through a double-displacement mechanism. The nucleophile active site attacks the C1' of nucleotide 34 to detach the guanine base from the RNA, forming a covalent enzyme-RNA intermediate. The proton acceptor active site deprotonates the incoming PreQ1, allowing a nucleophilic attack on the C1' of the ribose to form the product. After dissociation, two additional enzymatic reactions on the tRNA convert PreQ1 to queuine (Q), resulting in the hypermodified nucleoside queuosine (7-(((4,5-cis-dihydroxy-2-cyclopenten-1-yl)amino)methyl)-7-deazaguanosine). The chain is Queuine tRNA-ribosyltransferase from Rickettsia felis (strain ATCC VR-1525 / URRWXCal2) (Rickettsia azadi).